The sequence spans 542 residues: Chaperonin GroEL 2 (542 aa).

ATP is bound by residues 30–33 (TLGP), Lys-51, 87–91 (DGTTT), Gly-415, and Asp-494.

Belongs to the chaperonin (HSP60) family. In terms of assembly, forms a cylinder of 14 subunits composed of two heptameric rings stacked back-to-back. Interacts with the co-chaperonin GroES.

It is found in the cytoplasm. It carries out the reaction ATP + H2O + a folded polypeptide = ADP + phosphate + an unfolded polypeptide.. Its function is as follows. Together with its co-chaperonin GroES, plays an essential role in assisting protein folding. The GroEL-GroES system forms a nano-cage that allows encapsulation of the non-native substrate proteins and provides a physical environment optimized to promote and accelerate protein folding. This chain is Chaperonin GroEL 2, found in Syntrophobacter fumaroxidans (strain DSM 10017 / MPOB).